Reading from the N-terminus, the 331-residue chain is Biotin synthase (331 aa).

The 230-residue stretch at 40 to 269 (YRVQLASLLS…HARVRLSAGR (230 aa)) folds into the Radical SAM core domain. [4Fe-4S] cluster contacts are provided by Cys55, Cys59, and Cys62. [2Fe-2S] cluster is bound by residues Cys100, Cys132, Cys192, and Arg264.

It belongs to the radical SAM superfamily. Biotin synthase family. Homodimer. The cofactor is [4Fe-4S] cluster. Requires [2Fe-2S] cluster as cofactor.

The catalysed reaction is (4R,5S)-dethiobiotin + (sulfur carrier)-SH + 2 reduced [2Fe-2S]-[ferredoxin] + 2 S-adenosyl-L-methionine = (sulfur carrier)-H + biotin + 2 5'-deoxyadenosine + 2 L-methionine + 2 oxidized [2Fe-2S]-[ferredoxin]. It functions in the pathway cofactor biosynthesis; biotin biosynthesis; biotin from 7,8-diaminononanoate: step 2/2. Catalyzes the conversion of dethiobiotin (DTB) to biotin by the insertion of a sulfur atom into dethiobiotin via a radical-based mechanism. The chain is Biotin synthase from Synechococcus sp. (strain CC9605).